The following is a 278-amino-acid chain: Glycerophosphodiester phosphodiesterase GpdQ (278 aa).

Fe cation contacts are provided by Asp-8, His-10, Asp-50, Asn-80, His-156, His-195, and His-197.

Belongs to the cyclic nucleotide phosphodiesterase class-III family. Requires Fe(2+) as cofactor.

It carries out the reaction a sn-glycero-3-phosphodiester + H2O = an alcohol + sn-glycerol 3-phosphate + H(+). The enzyme catalyses sn-glycero-3-phosphoethanolamine + H2O = ethanolamine + sn-glycerol 3-phosphate + H(+). Catalyzes the hydrolysis of the 3'-5' phosphodiester bond of glycerophosphodiesters such as glycerophosphorylethanolamine (GPE), a typical phospholipid metabolite. The sequence is that of Glycerophosphodiester phosphodiesterase GpdQ from Enterobacter lignolyticus (strain SCF1).